Consider the following 382-residue polypeptide: Lipoyl synthase, mitochondrial (382 aa).

The N-terminal 30 residues, 1–30, are a transit peptide targeting the mitochondrion; sequence MHGRRHLAASLARALTYAPSRSISSTPSLL. Residues 25-34 show a composition bias toward polar residues; that stretch reads STPSLLQTLD. The disordered stretch occupies residues 25-47; the sequence is STPSLLQTLDPSTPSPAAAPPTA. Positions 112, 117, 123, 143, 147, 150, and 359 each coordinate [4Fe-4S] cluster. Residues 128 to 348 form the Radical SAM core domain; it reads ETGTATATIM…RSLGVDMGFR (221 aa).

The protein belongs to the radical SAM superfamily. Lipoyl synthase family. [4Fe-4S] cluster serves as cofactor.

It is found in the mitochondrion. The enzyme catalyses [[Fe-S] cluster scaffold protein carrying a second [4Fe-4S](2+) cluster] + N(6)-octanoyl-L-lysyl-[protein] + 2 oxidized [2Fe-2S]-[ferredoxin] + 2 S-adenosyl-L-methionine + 4 H(+) = [[Fe-S] cluster scaffold protein] + N(6)-[(R)-dihydrolipoyl]-L-lysyl-[protein] + 4 Fe(3+) + 2 hydrogen sulfide + 2 5'-deoxyadenosine + 2 L-methionine + 2 reduced [2Fe-2S]-[ferredoxin]. It participates in protein modification; protein lipoylation via endogenous pathway; protein N(6)-(lipoyl)lysine from octanoyl-[acyl-carrier-protein]: step 2/2. Its function is as follows. Catalyzes the radical-mediated insertion of two sulfur atoms into the C-6 and C-8 positions of the octanoyl moiety bound to the lipoyl domains of lipoate-dependent enzymes, thereby converting the octanoylated domains into lipoylated derivatives. This chain is Lipoyl synthase, mitochondrial, found in Oryza sativa subsp. indica (Rice).